The primary structure comprises 325 residues: Anthranilate phosphoribosyltransferase (325 aa).

Residues Gly74, 77-78, Thr82, 84-87, 101-109, and Ser113 each bind 5-phospho-alpha-D-ribose 1-diphosphate; these read GD, NVST, and KHGNVSITS. Residue Gly74 participates in anthranilate binding. Ser86 serves as a coordination point for Mg(2+). Asn104 contacts anthranilate. Position 159 (Arg159) interacts with anthranilate. 2 residues coordinate Mg(2+): Asp217 and Glu218.

Belongs to the anthranilate phosphoribosyltransferase family. As to quaternary structure, homodimer. It depends on Mg(2+) as a cofactor.

The enzyme catalyses N-(5-phospho-beta-D-ribosyl)anthranilate + diphosphate = 5-phospho-alpha-D-ribose 1-diphosphate + anthranilate. It participates in amino-acid biosynthesis; L-tryptophan biosynthesis; L-tryptophan from chorismate: step 2/5. Its function is as follows. Catalyzes the transfer of the phosphoribosyl group of 5-phosphorylribose-1-pyrophosphate (PRPP) to anthranilate to yield N-(5'-phosphoribosyl)-anthranilate (PRA). This Thermococcus kodakarensis (strain ATCC BAA-918 / JCM 12380 / KOD1) (Pyrococcus kodakaraensis (strain KOD1)) protein is Anthranilate phosphoribosyltransferase.